We begin with the raw amino-acid sequence, 719 residues long: Polyribonucleotide nucleotidyltransferase (719 aa).

Positions 491 and 497 each coordinate Mg(2+). Positions 558–617 (PRMLTIKINPEKIRDVIGKGGATIRALTEETGTQIDISDDGTIVIASVDETQAKEAQRRI) constitute a KH domain. Positions 627–695 (GQIYDGSVLR…DKGRLRLSIK (69 aa)) constitute an S1 motif domain.

It belongs to the polyribonucleotide nucleotidyltransferase family. Mg(2+) is required as a cofactor.

The protein localises to the cytoplasm. It carries out the reaction RNA(n+1) + phosphate = RNA(n) + a ribonucleoside 5'-diphosphate. Its function is as follows. Involved in mRNA degradation. Catalyzes the phosphorolysis of single-stranded polyribonucleotides processively in the 3'- to 5'-direction. This Bordetella bronchiseptica (strain ATCC BAA-588 / NCTC 13252 / RB50) (Alcaligenes bronchisepticus) protein is Polyribonucleotide nucleotidyltransferase.